The chain runs to 274 residues: Large ribosomal subunit protein uL2c (274 aa).

Disordered regions lie at residues 1–22 and 225–254; these read MAIH…DSQV and PVDH…PALG.

It belongs to the universal ribosomal protein uL2 family. Part of the 50S ribosomal subunit.

Its subcellular location is the plastid. The protein localises to the chloroplast. This chain is Large ribosomal subunit protein uL2c (rpl2), found in Sinapis alba (White mustard).